A 514-amino-acid polypeptide reads, in one-letter code: Flagellin B (514 aa).

It belongs to the bacterial flagellin family. As to quaternary structure, heteromer of FlaA and FlaB. FlaB is located proximal to the hook while the remainder of the filament is composed of the predominant FlaA.

It is found in the secreted. Its subcellular location is the bacterial flagellum. Flagellin is the subunit protein which polymerizes to form the filaments of bacterial flagella. Important for motility and virulence. This Helicobacter pylori (strain ATCC 700392 / 26695) (Campylobacter pylori) protein is Flagellin B (flaB).